Reading from the N-terminus, the 362-residue chain is Putative HLA class I histocompatibility antigen, alpha chain H (362 aa).

The N-terminal stretch at methionine 1–alanine 24 is a signal peptide. The segment at arginine 25–glycine 114 is alpha-1. Over arginine 25–isoleucine 308 the chain is Extracellular. Asparagine 110 carries an N-linked (GlcNAc...) asparagine glycan. An alpha-2 region spans residues glycine 115–alanine 206. Residues aspartate 207 to tryptophan 298 are alpha-3. The 89-residue stretch at proline 209–arginine 297 folds into the Ig-like C1-type domain. Cysteine 227 and cysteine 283 form a disulfide bridge. The connecting peptide stretch occupies residues glutamate 299 to isoleucine 308. The helical transmembrane segment at valine 309 to tryptophan 332 threads the bilayer. Residues arginine 333–alanine 362 are Cytoplasmic-facing. The disordered stretch occupies residues serine 337–alanine 362. The segment covering glycine 342–serine 356 has biased composition (low complexity).

Belongs to the MHC class I family. In terms of assembly, heterodimer of an alpha chain and a beta chain (beta-2-microglobulin).

The protein resides in the cell membrane. Its function is as follows. Involved in the presentation of foreign antigens to the immune system. This Homo sapiens (Human) protein is Putative HLA class I histocompatibility antigen, alpha chain H (HLA-H).